We begin with the raw amino-acid sequence, 137 residues long: Lysozyme (137 aa).

Positions 1–18 (MQKLIIFALVVLCVGSEA) are cleaved as a signal peptide. The C-type lysozyme domain occupies 19-137 (KTFTRCGLVH…QGSLPDISSC (119 aa)). 4 disulfides stabilise this stretch: Cys24/Cys137, Cys45/Cys127, Cys79/Cys93, and Cys89/Cys107. Active-site residues include Glu50 and Asp67.

Belongs to the glycosyl hydrolase 22 family.

It catalyses the reaction Hydrolysis of (1-&gt;4)-beta-linkages between N-acetylmuramic acid and N-acetyl-D-glucosamine residues in a peptidoglycan and between N-acetyl-D-glucosamine residues in chitodextrins.. In terms of biological role, lysozymes have primarily a bacteriolytic function; those in tissues and body fluids are associated with the monocyte-macrophage system and enhance the activity of immunoagents. Active against E.coli and M.luteus. This is Lysozyme from Bombyx mori (Silk moth).